Here is a 113-residue protein sequence, read N- to C-terminus: UPF0102 protein Mfla_2283 (113 aa).

Belongs to the UPF0102 family.

This chain is UPF0102 protein Mfla_2283, found in Methylobacillus flagellatus (strain ATCC 51484 / DSM 6875 / VKM B-1610 / KT).